The chain runs to 225 residues: DnaA regulatory inactivator Hda (225 aa).

It belongs to the DnaA family. HdA subfamily. As to quaternary structure, the active form seems to be an ADP-bound monomer. Forms the RIDA complex (regulatory inactivation of DnaA) of ATP-DnaA, ADP-Hda and the DNA-loaded beta sliding clamp (dnaN).

Functionally, mediates the interaction of DNA replication initiator protein DnaA with DNA polymerase subunit beta sliding clamp (dnaN). Stimulates hydrolysis of ATP-DnaA to ADP-DnaA, rendering DnaA inactive for reinitiation, a process called regulatory inhibition of DnaA or RIDA. The sequence is that of DnaA regulatory inactivator Hda from Klebsiella pneumoniae (strain 342).